We begin with the raw amino-acid sequence, 106 residues long: Large ribosomal subunit protein uL24 (106 aa).

The protein belongs to the universal ribosomal protein uL24 family. In terms of assembly, part of the 50S ribosomal subunit.

Functionally, one of two assembly initiator proteins, it binds directly to the 5'-end of the 23S rRNA, where it nucleates assembly of the 50S subunit. One of the proteins that surrounds the polypeptide exit tunnel on the outside of the subunit. The sequence is that of Large ribosomal subunit protein uL24 from Clostridium tetani (strain Massachusetts / E88).